Consider the following 474-residue polypeptide: 3-isopropylmalate dehydratase large subunit (474 aa).

C353, C414, and C417 together coordinate [4Fe-4S] cluster.

The protein belongs to the aconitase/IPM isomerase family. LeuC type 1 subfamily. Heterodimer of LeuC and LeuD. Requires [4Fe-4S] cluster as cofactor.

It carries out the reaction (2R,3S)-3-isopropylmalate = (2S)-2-isopropylmalate. It functions in the pathway amino-acid biosynthesis; L-leucine biosynthesis; L-leucine from 3-methyl-2-oxobutanoate: step 2/4. Catalyzes the isomerization between 2-isopropylmalate and 3-isopropylmalate, via the formation of 2-isopropylmaleate. The polypeptide is 3-isopropylmalate dehydratase large subunit (Xylella fastidiosa (strain M23)).